Consider the following 255-residue polypeptide: Thiazole synthase (255 aa).

K97 serves as the catalytic Schiff-base intermediate with DXP. 1-deoxy-D-xylulose 5-phosphate is bound by residues G158, A184 to G185, and N206 to T207.

The protein belongs to the ThiG family. As to quaternary structure, homotetramer. Forms heterodimers with either ThiH or ThiS.

Its subcellular location is the cytoplasm. The enzyme catalyses [ThiS sulfur-carrier protein]-C-terminal-Gly-aminoethanethioate + 2-iminoacetate + 1-deoxy-D-xylulose 5-phosphate = [ThiS sulfur-carrier protein]-C-terminal Gly-Gly + 2-[(2R,5Z)-2-carboxy-4-methylthiazol-5(2H)-ylidene]ethyl phosphate + 2 H2O + H(+). It participates in cofactor biosynthesis; thiamine diphosphate biosynthesis. Its function is as follows. Catalyzes the rearrangement of 1-deoxy-D-xylulose 5-phosphate (DXP) to produce the thiazole phosphate moiety of thiamine. Sulfur is provided by the thiocarboxylate moiety of the carrier protein ThiS. In vitro, sulfur can be provided by H(2)S. This is Thiazole synthase from Moorella thermoacetica (strain ATCC 39073 / JCM 9320).